We begin with the raw amino-acid sequence, 241 residues long: Ureidoacrylate amidohydrolase RutB (241 aa).

The active-site Proton acceptor is D38. Residue K147 is part of the active site. C180 functions as the Nucleophile in the catalytic mechanism.

This sequence belongs to the isochorismatase family. RutB subfamily.

The enzyme catalyses (Z)-3-ureidoacrylate + H2O + H(+) = (Z)-3-aminoacrylate + NH4(+) + CO2. It carries out the reaction (Z)-3-ureidoacrylate + H2O = (Z)-3-aminoacrylate + carbamate + H(+). It catalyses the reaction (Z)-2-methylureidoacrylate + H2O + H(+) = (Z)-2-methylaminoacrylate + NH4(+) + CO2. Its function is as follows. Hydrolyzes ureidoacrylate to form aminoacrylate and carbamate. The carbamate hydrolyzes spontaneously, thereby releasing one of the nitrogen atoms of the pyrimidine ring as ammonia and one of its carbon atoms as CO2. In Haliangium ochraceum (strain DSM 14365 / JCM 11303 / SMP-2), this protein is Ureidoacrylate amidohydrolase RutB.